We begin with the raw amino-acid sequence, 112 residues long: Putative galactitol utilization operon repressor (112 aa).

The HTH deoR-type domain maps to 5–60 (SFERRNKIIQLVNEQGTVLVQDLAGVFAASEATIRADLRFLEQKGVVTRFHGGAAK). A DNA-binding region (H-T-H motif) is located at residues 22 to 41 (VLVQDLAGVFAASEATIRAD).

Functionally, repressor of the gat operon for galacticol transport and metabolism. In K12 strains the operon is constitutively expressed because this gene is inactive. In Escherichia coli (strain K12), this protein is Putative galactitol utilization operon repressor (gatR).